A 149-amino-acid polypeptide reads, in one-letter code: Probable calcium-binding protein CML25/26 (149 aa).

EF-hand domains lie at 1–35, 37–72, 77–113, and 117–149; these read MASSASSVFAAFDKDGDGKVSASELRGCMAAALGE, VSEEEAAAILATADTDGDGLLDHHEFMRLSAAHQLQ, ESLRCLREAFDMYAEEEETAVITPASLRRMLRRLGSE, and LEMEECRAMICRFDLNGDGVLSFDEFRVMMLMA. Asp13, Asp15, Asp17, Lys19, Glu24, Asp50, Asp52, Asp54, and Glu61 together coordinate Ca(2+). Ca(2+) is bound by residues Asp130, Asn132, Asp134, and Glu141.

Potential calcium sensor. The polypeptide is Probable calcium-binding protein CML25/26 (CML25) (Oryza sativa subsp. japonica (Rice)).